A 209-amino-acid polypeptide reads, in one-letter code: Large ribosomal subunit protein bL21m (209 aa).

Residues 1 to 43 constitute a mitochondrion transit peptide; sequence MAAAIAASALPGAFGRLVSVCSRSILASQGSGSASLWSASRRF.

This sequence belongs to the bacterial ribosomal protein bL21 family. In terms of assembly, component of the mitochondrial ribosome large subunit (39S) which comprises a 16S rRNA and about 50 distinct proteins.

It localises to the mitochondrion. This chain is Large ribosomal subunit protein bL21m (Mrpl21), found in Mus musculus (Mouse).